A 398-amino-acid polypeptide reads, in one-letter code: Succinate--CoA ligase [ADP-forming] subunit beta (398 aa).

The ATP-grasp domain occupies 9–254 (KAVLREFGVP…ETEEDAKEIE (246 aa)). Residues Lys46, 53–55 (GRG), Glu109, Ser112, and Glu117 each bind ATP. Mg(2+) is bound by residues Asn209 and Asp223. Substrate is bound by residues Asn274 and 331-333 (GIM).

This sequence belongs to the succinate/malate CoA ligase beta subunit family. In terms of assembly, heterotetramer of two alpha and two beta subunits. Mg(2+) serves as cofactor.

The enzyme catalyses succinate + ATP + CoA = succinyl-CoA + ADP + phosphate. It catalyses the reaction GTP + succinate + CoA = succinyl-CoA + GDP + phosphate. It participates in carbohydrate metabolism; tricarboxylic acid cycle; succinate from succinyl-CoA (ligase route): step 1/1. In terms of biological role, succinyl-CoA synthetase functions in the citric acid cycle (TCA), coupling the hydrolysis of succinyl-CoA to the synthesis of either ATP or GTP and thus represents the only step of substrate-level phosphorylation in the TCA. The beta subunit provides nucleotide specificity of the enzyme and binds the substrate succinate, while the binding sites for coenzyme A and phosphate are found in the alpha subunit. This is Succinate--CoA ligase [ADP-forming] subunit beta from Rhodopseudomonas palustris (strain ATCC BAA-98 / CGA009).